Consider the following 237-residue polypeptide: Purine nucleoside phosphorylase DeoD-type (237 aa).

His-4 contributes to the a purine D-ribonucleoside binding site. Residues Gly-20, Arg-24, Arg-43, and 87–90 (RVGT) each bind phosphate. A purine D-ribonucleoside contacts are provided by residues 179-181 (EME) and 203-204 (SD). Residue Asp-204 is the Proton donor of the active site.

It belongs to the PNP/UDP phosphorylase family. As to quaternary structure, homohexamer; trimer of homodimers.

The catalysed reaction is a purine D-ribonucleoside + phosphate = a purine nucleobase + alpha-D-ribose 1-phosphate. It catalyses the reaction a purine 2'-deoxy-D-ribonucleoside + phosphate = a purine nucleobase + 2-deoxy-alpha-D-ribose 1-phosphate. In terms of biological role, catalyzes the reversible phosphorolytic breakdown of the N-glycosidic bond in the beta-(deoxy)ribonucleoside molecules, with the formation of the corresponding free purine bases and pentose-1-phosphate. The protein is Purine nucleoside phosphorylase DeoD-type of Clostridium beijerinckii (strain ATCC 51743 / NCIMB 8052) (Clostridium acetobutylicum).